The sequence spans 489 residues: Transcription factor TGAL11 (489 aa).

A compositionally biased stretch (low complexity) spans 87-99 (AATATATARPPAT). The tract at residues 87–181 (AATATATARP…SDHRMTKTLD (95 aa)) is disordered. The segment covering 121–139 (SNVTADTTDSESSSKNNGD) has biased composition (polar residues). The segment covering 148 to 159 (ASQFDQIPQQQQ) has biased composition (low complexity). The span at 171–181 (HSDHRMTKTLD) shows a compositional bias: basic and acidic residues. Residues 181-225 (DPKIMRRLAQNREAARKSRLRKKAYIQQLESSKLRLAQMEQDLER) form the bZIP domain. The basic motif stretch occupies residues 183–203 (KIMRRLAQNREAARKSRLRKK). The tract at residues 209–223 (LESSKLRLAQMEQDL) is leucine-zipper. The DOG1 domain occupies 245 to 460 (AAMFDAEYGR…RALSSLWASR (216 aa)).

It belongs to the bZIP family.

It is found in the nucleus. Transcriptional regulator involved in defense response. The protein is Transcription factor TGAL11 of Oryza sativa subsp. japonica (Rice).